The chain runs to 256 residues: DNA repair protein RecO (256 aa).

This sequence belongs to the RecO family.

Involved in DNA repair and RecF pathway recombination. In Rhizobium johnstonii (strain DSM 114642 / LMG 32736 / 3841) (Rhizobium leguminosarum bv. viciae), this protein is DNA repair protein RecO.